An 868-amino-acid polypeptide reads, in one-letter code: Spindle and centriole-associated protein 1 (868 aa).

Disordered regions lie at residues 129 to 154, 172 to 201, 229 to 250, and 291 to 326; these read RTGF…DPGT, DDGG…HSNR, IAAQ…AEDQ, and KPLL…LASS. Composition is skewed to polar residues over residues 190 to 200 and 229 to 245; these read ELPNSLSPHSN and IAAQ…SSEL. Thr236 bears the Phosphothreonine mark. Position 240 is a phosphoserine (Ser240). A compositionally biased stretch (low complexity) spans 315 to 326; the sequence is SSSTTSADLASS. Residues 381-434 are a coiled coil; the sequence is RYLKESETQLRKEVETRQQLEQMLGDHRELIDALTAEILLLREENGAVQARLQQ. Disordered stretches follow at residues 630 to 664 and 702 to 722; these read PQFV…LGDG and SSGG…NASE. Positions 634 to 649 are enriched in low complexity; that stretch reads SLSQPPCSSPPSTQQS. Ser655 bears the Phosphoserine mark. Residues 706–715 are compositionally biased toward basic and acidic residues; it reads EHGDGLREPS. Residues 736 to 764 adopt a coiled-coil conformation; the sequence is SSMEERIAELNRQSMEARSKLLQLIEQQK. A phosphoserine mark is found at Ser772, Ser773, Ser776, and Ser831. Positions 805 to 868 are disordered; it reads SSKCNTVSPV…GWFALSAHLP (64 aa). Low complexity predominate over residues 812-831; the sequence is SPVSGVSSRRSSGAISNSCS.

Interacts with CEP120.

It is found in the cytoplasm. The protein localises to the cytoskeleton. It localises to the microtubule organizing center. The protein resides in the centrosome. Its subcellular location is the centriole. It is found in the spindle. Its function is as follows. Regulator required for centriole duplication, for proper bipolar spindle formation and chromosome congression in mitosis. The chain is Spindle and centriole-associated protein 1 (Spice1) from Rattus norvegicus (Rat).